The chain runs to 198 residues: Glycerol-3-phosphate acyltransferase (198 aa).

Helical transmembrane passes span 10 to 30 (LIPI…WILV), 57 to 77 (GISF…ILIL), 86 to 106 (IMYL…WFLF), 118 to 138 (VVLS…AVVF), and 160 to 180 (AVTE…IVLI).

This sequence belongs to the PlsY family. As to quaternary structure, probably interacts with PlsX.

The protein localises to the cell inner membrane. The catalysed reaction is an acyl phosphate + sn-glycerol 3-phosphate = a 1-acyl-sn-glycero-3-phosphate + phosphate. Its pathway is lipid metabolism; phospholipid metabolism. Functionally, catalyzes the transfer of an acyl group from acyl-phosphate (acyl-PO(4)) to glycerol-3-phosphate (G3P) to form lysophosphatidic acid (LPA). This enzyme utilizes acyl-phosphate as fatty acyl donor, but not acyl-CoA or acyl-ACP. This is Glycerol-3-phosphate acyltransferase from Anaplasma marginale (strain St. Maries).